The primary structure comprises 496 residues: E3 ubiquitin-protein ligase XIAP (496 aa).

BIR repeat units lie at residues 26–93, 163–230, and 264–329; these read EFNR…CRFI, EEAR…CFFV, and YDAR…CKYL. Zn(2+) contacts are provided by Cys-299, Cys-302, and His-319. A Glycyl lysine isopeptide (Lys-Gly) (interchain with G-Cter in ubiquitin) cross-link involves residue Lys-321. A Zn(2+)-binding site is contributed by Cys-326. Lys-327 is covalently cross-linked (Glycyl lysine isopeptide (Lys-Gly) (interchain with G-Cter in ubiquitin)). Cys-449 carries the post-translational modification S-nitrosocysteine. The segment at 449–484 adopts an RING-type zinc-finger fold; the sequence is CKICMDRNIAIVFVPCGHLVTCKQCAEAVDKCPMCC.

The protein belongs to the IAP family. As to quaternary structure, monomer, and homodimer. Interacts (via BIR3 domain) with DIABLO/SMAC; the interaction inhibits apoptotic suppressor activity. Interacts with HTRA2/PRSS25; the interaction inhibits apoptotic suppressor activity. Interacts with TAB1/MAP3K7IP1 and AIFM1. Interaction with DIABLO/SMAC hinders binding of TAB1/MAP3K7IP1 and AIFM1. Interacts with TCF25 and COMMD1. Interacts (via BIR3 domain) with SEPTIN4. Interacts with RIP1, RIP2, RIP3, RIP4, CCS and USP19. Interacts (via BIR 2 domain and BIR 3 domain) with HAX1 (via C-terminus) and this interaction blocks ubiquitination of XIAP/BIRC4. Interacts with the monomeric form of BIRC5/survivin. Interacts with TLE3 and TCF7L2/TCF4. Interacts (via BIR 3 and RING domains) with PDCL3. Post-translationally, S-Nitrosylation down-regulates its E3 ubiquitin-protein ligase activity. In terms of processing, autoubiquitinated. Ubiquitinated by TRIM32; leading to proteasomal degradation.

It localises to the cytoplasm. Its subcellular location is the nucleus. The catalysed reaction is S-ubiquitinyl-[E2 ubiquitin-conjugating enzyme]-L-cysteine + [acceptor protein]-L-lysine = [E2 ubiquitin-conjugating enzyme]-L-cysteine + N(6)-ubiquitinyl-[acceptor protein]-L-lysine.. Functionally, multi-functional protein which regulates not only caspases and apoptosis, but also modulates inflammatory signaling and immunity, copper homeostasis, mitogenic kinase signaling, cell proliferation, as well as cell invasion and metastasis. Acts as a direct caspase inhibitor. Directly bind to the active site pocket of CASP3 and CASP7 and obstructs substrate entry. Inactivates CASP9 by keeping it in a monomeric, inactive state. Acts as an E3 ubiquitin-protein ligase regulating NF-kappa-B signaling and the target proteins for its E3 ubiquitin-protein ligase activity include: RIPK1, RIPK2, MAP3K2/MEKK2, DIABLO/SMAC, AIFM1, CCS, PTEN and BIRC5/survivin. Acts as an important regulator of innate immunity by mediating 'Lys-63'-linked polyubiquitination of RIPK2 downstream of NOD1 and NOD2, thereby transforming RIPK2 into a scaffolding protein for downstream effectors, ultimately leading to activation of the NF-kappa-B and MAP kinases signaling. 'Lys-63'-linked polyubiquitination of RIPK2 also promotes recruitment of the LUBAC complex to RIPK2. Regulates the BMP signaling pathway and the SMAD and MAP3K7/TAK1 dependent pathways leading to NF-kappa-B and JNK activation. Ubiquitination of CCS leads to enhancement of its chaperone activity toward its physiologic target, SOD1, rather than proteasomal degradation. Ubiquitination of MAP3K2/MEKK2 and AIFM1 does not lead to proteasomal degradation. Plays a role in copper homeostasis by ubiquitinating COMMD1 and promoting its proteasomal degradation. Can also function as E3 ubiquitin-protein ligase of the NEDD8 conjugation pathway, targeting effector caspases for neddylation and inactivation. Ubiquitinates and therefore mediates the proteasomal degradation of BCL2 in response to apoptosis. Protects cells from spontaneous formation of the ripoptosome, a large multi-protein complex that has the capability to kill cancer cells in a caspase-dependent and caspase-independent manner. Suppresses ripoptosome formation by ubiquitinating RIPK1 and CASP8. Acts as a positive regulator of Wnt signaling and ubiquitinates TLE1, TLE2, TLE3, TLE4 and AES. Ubiquitination of TLE3 results in inhibition of its interaction with TCF7L2/TCF4 thereby allowing efficient recruitment and binding of the transcriptional coactivator beta-catenin to TCF7L2/TCF4 that is required to initiate a Wnt-specific transcriptional program. The chain is E3 ubiquitin-protein ligase XIAP (Xiap) from Rattus norvegicus (Rat).